The chain runs to 351 residues: Leukotriene B4 receptor 1 (351 aa).

The Extracellular segment spans residues 1 to 21 (MAANTTSPAAPSSPGGMSLSL). Asn-4 carries N-linked (GlcNAc...) asparagine glycosylation. The helical transmembrane segment at 22–44 (LPIVLLSVALAVGLPGNSFVVWS) threads the bilayer. The Cytoplasmic portion of the chain corresponds to 45–56 (ILKRMQKRTVTA). The helical transmembrane segment at 57–77 (LLVLNLALADLAVLLTAPFFL) threads the bilayer. Residues 78–93 (HFLARGTWSFREMGCR) are Extracellular-facing. The chain crosses the membrane as a helical span at residues 94–115 (LCHYVCGISMYASVLLITIMSL). The Cytoplasmic portion of the chain corresponds to 116 to 140 (DRSLAVARPFMSQKVRTKAFARWVL). A helical transmembrane segment spans residues 141 to 161 (AGIWVVSFLLAIPVLVYRTVK). At 162 to 179 (WNNRTLICAPNYPNKEHK) the chain is on the extracellular side. The N-linked (GlcNAc...) asparagine glycan is linked to Asn-164. Residues 180-200 (VFHLLFEAITGFLLPFLAVVA) form a helical membrane-spanning segment. Residues 201–222 (SYSDIGRRLQARRFRRSRRTGR) are Cytoplasmic-facing. Residues 223-243 (LVVLIILAFAAFWLPYHLVNL) traverse the membrane as a helical segment. Residues 244–268 (VEAGRTVAGWDKNSPAGQRLRLARY) are Extracellular-facing. The helical transmembrane segment at 269–289 (VLIALAFLSSSVNPVLYACAG) threads the bilayer. Residues 290–351 (GGLLRSAGVG…TSSTIPESSK (62 aa)) lie on the Cytoplasmic side of the membrane. 2 stretches are compositionally biased toward polar residues: residues 311 to 326 (EVSS…QTPK) and 339 to 351 (SFMT…ESSK). The tract at residues 311 to 351 (EVSSTRRGGTLVQTPKDTPACPEPGPTDSFMTSSTIPESSK) is disordered.

The protein belongs to the G-protein coupled receptor 1 family. Phosphorylated by GRK6 upon leukotriene B4 binding; which promotes desensitization. Highly expressed on activated leukocytes, including eosinophils.

Its subcellular location is the cell membrane. In terms of biological role, receptor for leukotriene B4, a potent chemoattractant involved in inflammation and immune response. The sequence is that of Leukotriene B4 receptor 1 (Ltb4r) from Mus musculus (Mouse).